A 216-amino-acid chain; its full sequence is Guanylate kinase (216 aa).

The Guanylate kinase-like domain occupies 15-193; that stretch reads GNLFMVVAPS…ALKQLQNVVH (179 aa). 22 to 29 contacts ATP; sequence APSGAGKS.

The protein belongs to the guanylate kinase family.

Its subcellular location is the cytoplasm. The catalysed reaction is GMP + ATP = GDP + ADP. Functionally, essential for recycling GMP and indirectly, cGMP. This is Guanylate kinase from Cupriavidus metallidurans (strain ATCC 43123 / DSM 2839 / NBRC 102507 / CH34) (Ralstonia metallidurans).